Here is a 289-residue protein sequence, read N- to C-terminus: 4-hydroxy-tetrahydrodipicolinate synthase (289 aa).

A pyruvate-binding site is contributed by threonine 46. The active-site Proton donor/acceptor is tyrosine 134. Lysine 162 serves as the catalytic Schiff-base intermediate with substrate. Pyruvate is bound at residue valine 204.

The protein belongs to the DapA family. As to quaternary structure, homotetramer; dimer of dimers.

The protein localises to the cytoplasm. It catalyses the reaction L-aspartate 4-semialdehyde + pyruvate = (2S,4S)-4-hydroxy-2,3,4,5-tetrahydrodipicolinate + H2O + H(+). The protein operates within amino-acid biosynthesis; L-lysine biosynthesis via DAP pathway; (S)-tetrahydrodipicolinate from L-aspartate: step 3/4. Its function is as follows. Catalyzes the condensation of (S)-aspartate-beta-semialdehyde [(S)-ASA] and pyruvate to 4-hydroxy-tetrahydrodipicolinate (HTPA). This is 4-hydroxy-tetrahydrodipicolinate synthase from Bacillus velezensis (strain DSM 23117 / BGSC 10A6 / LMG 26770 / FZB42) (Bacillus amyloliquefaciens subsp. plantarum).